Reading from the N-terminus, the 128-residue chain is Saitohin (128 aa).

Residues Ser77–Gly87 show a composition bias toward polar residues. The disordered stretch occupies residues Ser77 to Val128.

In terms of assembly, interacts with PRDX6.

The protein resides in the cytoplasm. Its subcellular location is the nucleus. In Pan troglodytes (Chimpanzee), this protein is Saitohin (STH).